A 432-amino-acid chain; its full sequence is 23S rRNA (uracil(1939)-C(5))-methyltransferase RlmD (432 aa).

A TRAM domain is found at 10-68 (RVTTREIITVTTDGLDAFGQGVARHHGKALFIAGLLPGERAEVVLSEDKKQFARGDVKK). Cys81, Cys87, Cys90, and Cys162 together coordinate [4Fe-4S] cluster. S-adenosyl-L-methionine-binding residues include Gln265, Phe294, Asn299, Glu315, Asn342, and Asp363. Cys389 serves as the catalytic Nucleophile.

This sequence belongs to the class I-like SAM-binding methyltransferase superfamily. RNA M5U methyltransferase family. RlmD subfamily.

It carries out the reaction uridine(1939) in 23S rRNA + S-adenosyl-L-methionine = 5-methyluridine(1939) in 23S rRNA + S-adenosyl-L-homocysteine + H(+). In terms of biological role, catalyzes the formation of 5-methyl-uridine at position 1939 (m5U1939) in 23S rRNA. This is 23S rRNA (uracil(1939)-C(5))-methyltransferase RlmD from Cronobacter sakazakii (strain ATCC BAA-894) (Enterobacter sakazakii).